The sequence spans 344 residues: Anthranilate phosphoribosyltransferase 2 (344 aa).

5-phospho-alpha-D-ribose 1-diphosphate is bound by residues glycine 81, 84 to 85 (GD), threonine 89, 91 to 94 (NIST), 109 to 117 (KHGNRALSS), and alanine 121. An anthranilate-binding site is contributed by glycine 81. Serine 93 contributes to the Mg(2+) binding site. Asparagine 112 contributes to the anthranilate binding site. An anthranilate-binding site is contributed by arginine 167. Residues aspartate 226 and glutamate 227 each contribute to the Mg(2+) site.

This sequence belongs to the anthranilate phosphoribosyltransferase family. Homodimer. It depends on Mg(2+) as a cofactor.

It carries out the reaction N-(5-phospho-beta-D-ribosyl)anthranilate + diphosphate = 5-phospho-alpha-D-ribose 1-diphosphate + anthranilate. The protein operates within amino-acid biosynthesis; L-tryptophan biosynthesis; L-tryptophan from chorismate: step 2/5. In terms of biological role, catalyzes the transfer of the phosphoribosyl group of 5-phosphorylribose-1-pyrophosphate (PRPP) to anthranilate to yield N-(5'-phosphoribosyl)-anthranilate (PRA). This Ralstonia nicotianae (strain ATCC BAA-1114 / GMI1000) (Ralstonia solanacearum) protein is Anthranilate phosphoribosyltransferase 2.